Reading from the N-terminus, the 555-residue chain is Sulfite reductase [ferredoxin] 1 (555 aa).

The segment at residues 69–161 (YTQREQGYDG…SVGLQTTEAC (93 aa)) is a cross-link (3'-(S-cysteinyl)-tyrosine (Tyr-Cys)). Positions 417, 423, 463, and 467 each coordinate [4Fe-4S] cluster. Cysteine 467 provides a ligand contact to siroheme.

This sequence belongs to the nitrite and sulfite reductase 4Fe-4S domain family. Monomer. It depends on siroheme as a cofactor. [4Fe-4S] cluster is required as a cofactor.

The catalysed reaction is hydrogen sulfide + 6 oxidized [2Fe-2S]-[ferredoxin] + 3 H2O = sulfite + 6 reduced [2Fe-2S]-[ferredoxin] + 7 H(+). Its function is as follows. Catalyzes the reduction of sulfite to sulfide, a step in the biosynthesis of sulfur-containing amino acids and cofactors. This Mycolicibacterium paratuberculosis (strain ATCC BAA-968 / K-10) (Mycobacterium paratuberculosis) protein is Sulfite reductase [ferredoxin] 1 (sir1).